We begin with the raw amino-acid sequence, 320 residues long: Pyrroline-5-carboxylate reductase 2 (320 aa).

The residue at position 2 (Ser2) is an N-acetylserine. NADP(+)-binding positions include Ile6–Leu11 and Ser34. The NADPH site is built by Ala8, Gln10, Leu11, Ser34, Glu36, Asn56, Val70, Lys71, and Ala97. NADP(+)-binding positions include Asn56, Ala69–Pro72, and Cys95–Ala97. Glu164 is an L-proline binding site. Asn230 is a binding site for NADPH. Ala237 and Thr238 together coordinate L-proline. Residues Pro295–Pro305 are compositionally biased toward low complexity. The interval Pro295–Asp320 is disordered. At Ser304 the chain carries Phosphoserine.

The protein belongs to the pyrroline-5-carboxylate reductase family. In terms of assembly, homodecamer; composed of 5 homodimers. Interacts with LTO1. Detected in erythrocytes (at protein level). Expressed in fetal brain.

Its subcellular location is the cytoplasm. It is found in the mitochondrion. The catalysed reaction is L-proline + NADP(+) = (S)-1-pyrroline-5-carboxylate + NADPH + 2 H(+). It catalyses the reaction L-proline + NAD(+) = (S)-1-pyrroline-5-carboxylate + NADH + 2 H(+). It functions in the pathway amino-acid biosynthesis; L-proline biosynthesis; L-proline from L-glutamate 5-semialdehyde: step 1/1. Its activity is regulated as follows. Subject to competitive inhibition by NADP. Was reported not to be inhibited by proline. However other study demonstrated an inhibition by proline. Functionally, oxidoreductase that catalyzes the last step in proline biosynthesis, which corresponds to the reduction of pyrroline-5-carboxylate to L-proline using NAD(P)H. At physiologic concentrations, has higher specific activity in the presence of NADH. Involved in cellular response to oxidative stress. In some cell types, such as erythrocytes, its primary function may be the generation of NADP(+). In Homo sapiens (Human), this protein is Pyrroline-5-carboxylate reductase 2.